The sequence spans 291 residues: Proline iminopeptidase (291 aa).

An AB hydrolase-1 domain is found at leucine 30–aspartate 274. Serine 103 (nucleophile) is an active-site residue. Residue aspartate 242 is part of the active site. Histidine 269 acts as the Proton donor in catalysis.

Belongs to the peptidase S33 family.

Its subcellular location is the cell envelope. The catalysed reaction is Release of N-terminal proline from a peptide.. In terms of biological role, releases the N-terminal proline from various substrates. The protein is Proline iminopeptidase of Lacticaseibacillus rhamnosus (strain Lc 705) (Lactobacillus rhamnosus).